Here is a 443-residue protein sequence, read N- to C-terminus: Chromosomal replication initiator protein DnaA (443 aa).

A domain I, interacts with DnaA modulators region spans residues 1–80 (MTSQFASLWQ…LGESVEVRFF (80 aa)). The tract at residues 80 to 104 (FTPSADSRRSEPSRRPVATEESSPP) is domain II. The segment at 83 to 105 (SADSRRSEPSRRPVATEESSPPL) is disordered. The span at 85-97 (DSRRSEPSRRPVA) shows a compositional bias: basic and acidic residues. The segment at 105-321 (LLNPKYTFDT…GALNRVIAYA (217 aa)) is domain III, AAA+ region. Residues Gly-149, Gly-151, Lys-152, and Thr-153 each contribute to the ATP site. Residues 322-443 (NLSGKSLTSE…QVLKEKIQRA (122 aa)) are domain IV, binds dsDNA.

The protein belongs to the DnaA family. As to quaternary structure, oligomerizes as a right-handed, spiral filament on DNA at oriC.

The protein resides in the cytoplasm. Plays an essential role in the initiation and regulation of chromosomal replication. ATP-DnaA binds to the origin of replication (oriC) to initiate formation of the DNA replication initiation complex once per cell cycle. Binds the DnaA box (a 9 base pair repeat at the origin) and separates the double-stranded (ds)DNA. Forms a right-handed helical filament on oriC DNA; dsDNA binds to the exterior of the filament while single-stranded (ss)DNA is stabiized in the filament's interior. The ATP-DnaA-oriC complex binds and stabilizes one strand of the AT-rich DNA unwinding element (DUE), permitting loading of DNA polymerase. After initiation quickly degrades to an ADP-DnaA complex that is not apt for DNA replication. Binds acidic phospholipids. This is Chromosomal replication initiator protein DnaA from Heliobacterium modesticaldum (strain ATCC 51547 / Ice1).